The following is a 585-amino-acid chain: MNIFADFDARIKKTFQDIDLKPKDGGELDLSRIGVEPPRDASHGDIATNAAMVLSKAVGQNPRELAARIAEALKADEDVESVDVAGPGFINLRLKASYWQRELLVMLNEGTDFGRSRLGAGKKVNVEYVSANPTGPMHVGHCRGAVVGDVLANLLKFAGYDVVKEYYINDAGAQIDVLARSVMLRYREALGESIGEIPAGLYPGDYLVRVGQELAGEFGTKLLEMPEAEALAIVKDRTIDAMMAMIRADLDALNVHHDVFYSERKLHVDHARAIRNAINDLTLKGHVYKGKLPPPKGRLPEDWEDREQTLFRSTEVGDDIDRPLMKSDGSFTYFAGDVTYFKDKYDRGFNEMIYVLGADHGGYVKRLEAVARAVSDGKAKLTVLLCQLVKLFRNGEPVRMSKRAGEFITLRDVVDEVGRDPVRFMMLYRKNDAPLDFDFAKVTEQSKDNPVFYVQYASARCHSVFRQAADQLGLVDLDRVAMGSHFEKLTDESEIALVRKLAEYPRLIESAAIHQEPHRLAFYLYDLASSFHSQWNRGAENPDLRFIKVNDPDLSLARLGLVQVVSDVLTSGLTIIGADAPTEMR.

Residues 131 to 141 (ANPTGPMHVGH) carry the 'HIGH' region motif.

This sequence belongs to the class-I aminoacyl-tRNA synthetase family. Monomer.

It localises to the cytoplasm. It catalyses the reaction tRNA(Arg) + L-arginine + ATP = L-arginyl-tRNA(Arg) + AMP + diphosphate. The sequence is that of Arginine--tRNA ligase from Brucella abortus (strain S19).